A 307-amino-acid polypeptide reads, in one-letter code: PCP degradation transcriptional activation protein (307 aa).

Residues 6–63 (LPLGHLMVFDALYRHGSAGKAAHALSMPQPTLSRWLAQLRTHFDDPLFVRTRSGMEPT) form the HTH lysR-type domain. A DNA-binding region (H-T-H motif) is located at residues 23-42 (AGKAAHALSMPQPTLSRWLA).

The protein belongs to the LysR transcriptional regulatory family.

Functionally, transcriptional activator for the pcpA, pcpB and pcpE genes for pentachlorophenol (PCP) degradation. Essential for PCP degradation. This chain is PCP degradation transcriptional activation protein (pcpR), found in Sphingobium chlorophenolicum.